The primary structure comprises 481 residues: Argininosuccinate lyase (481 aa).

This sequence belongs to the lyase 1 family. Argininosuccinate lyase subfamily.

The protein resides in the cytoplasm. It carries out the reaction 2-(N(omega)-L-arginino)succinate = fumarate + L-arginine. It participates in amino-acid biosynthesis; L-arginine biosynthesis; L-arginine from L-ornithine and carbamoyl phosphate: step 3/3. The sequence is that of Argininosuccinate lyase from Methanococcus vannielii (strain ATCC 35089 / DSM 1224 / JCM 13029 / OCM 148 / SB).